Here is a 160-residue protein sequence, read N- to C-terminus: MRIVVIAVGRLKQGPERELAERYRERFDDLGRKLGFRGLDLHELPESRARDAATRISEEAAAIAALIPGRSVLVCLDERGQNIDSASLAAQIGRWRDEGVPAAVFVIGGADGLSPELRRRAKLGVAFGAATWPHQIVRVLLFEQIYRTATILAGHPYHRA.

S-adenosyl-L-methionine-binding residues include leucine 76 and glycine 108.

It belongs to the RNA methyltransferase RlmH family. As to quaternary structure, homodimer.

The protein resides in the cytoplasm. It carries out the reaction pseudouridine(1915) in 23S rRNA + S-adenosyl-L-methionine = N(3)-methylpseudouridine(1915) in 23S rRNA + S-adenosyl-L-homocysteine + H(+). Specifically methylates the pseudouridine at position 1915 (m3Psi1915) in 23S rRNA. In Bradyrhizobium sp. (strain BTAi1 / ATCC BAA-1182), this protein is Ribosomal RNA large subunit methyltransferase H.